A 610-amino-acid polypeptide reads, in one-letter code: Butyryl-CoA dehydrogenase Swol_2052 (610 aa).

Glutamate 451 (proton acceptor) is an active-site residue.

The protein belongs to the acyl-CoA dehydrogenase family. Requires FAD as cofactor.

It localises to the cytoplasm. It catalyses the reaction butanoyl-CoA + oxidized [electron-transfer flavoprotein] + H(+) = (2E)-butenoyl-CoA + reduced [electron-transfer flavoprotein]. The catalysed reaction is a short-chain 2,3-saturated fatty acyl-CoA + oxidized [electron-transfer flavoprotein] + H(+) = a short-chain (2E)-enoyl-CoA + reduced [electron-transfer flavoprotein]. Its pathway is lipid metabolism; butanoate metabolism. Its function is as follows. Involved in syntrophic growth of S.wolfei with butyrate, as part of the butyrate oxidation pathway. Catalyzes the oxidation of butanoyl-CoA to crotonyl-CoA. Probably passes the electrons released by this reaction on to electron-transfer flavoproteins (EtfAB) to finally generate hydrogen and/or formate. This Syntrophomonas wolfei subsp. wolfei (strain DSM 2245B / Goettingen) protein is Butyryl-CoA dehydrogenase Swol_2052.